We begin with the raw amino-acid sequence, 290 residues long: Acetyl-coenzyme A carboxylase carboxyl transferase subunit beta (290 aa).

A CoA carboxyltransferase N-terminal domain is found at Leu29–Lys290. Residues Cys33, Cys36, Cys52, and Cys55 each contribute to the Zn(2+) site. A C4-type zinc finger spans residues Cys33 to Cys55.

It belongs to the AccD/PCCB family. In terms of assembly, acetyl-CoA carboxylase is a heterohexamer composed of biotin carboxyl carrier protein (AccB), biotin carboxylase (AccC) and two subunits each of ACCase subunit alpha (AccA) and ACCase subunit beta (AccD). Zn(2+) is required as a cofactor.

Its subcellular location is the cytoplasm. It carries out the reaction N(6)-carboxybiotinyl-L-lysyl-[protein] + acetyl-CoA = N(6)-biotinyl-L-lysyl-[protein] + malonyl-CoA. The protein operates within lipid metabolism; malonyl-CoA biosynthesis; malonyl-CoA from acetyl-CoA: step 1/1. Its function is as follows. Component of the acetyl coenzyme A carboxylase (ACC) complex. Biotin carboxylase (BC) catalyzes the carboxylation of biotin on its carrier protein (BCCP) and then the CO(2) group is transferred by the transcarboxylase to acetyl-CoA to form malonyl-CoA. The polypeptide is Acetyl-coenzyme A carboxylase carboxyl transferase subunit beta (Prochlorococcus marinus (strain MIT 9211)).